The primary structure comprises 313 residues: Hydroxyphenylpyruvate reductase (313 aa).

NADP(+)-binding positions include 152 to 155 (LGRI), 174 to 176 (SRS), and I230. Residue R232 is part of the active site. D256 lines the NADP(+) pocket. E261 is an active-site residue. The active-site Proton donor is H279.

The protein belongs to the D-isomer specific 2-hydroxyacid dehydrogenase family.

The catalysed reaction is (2R)-2-hydroxy-3-(4-hydroxyphenyl)propanoate + NAD(+) = 3-(4-hydroxyphenyl)pyruvate + NADH + H(+). The enzyme catalyses (2R)-2-hydroxy-3-(4-hydroxyphenyl)propanoate + NADP(+) = 3-(4-hydroxyphenyl)pyruvate + NADPH + H(+). It carries out the reaction (2R)-3-(3,4-dihydroxyphenyl)lactate + NADP(+) = 3-(3,4-dihydroxyphenyl)pyruvate + NADPH + H(+). It catalyses the reaction (2R)-3-(3,4-dihydroxyphenyl)lactate + NAD(+) = 3-(3,4-dihydroxyphenyl)pyruvate + NADH + H(+). Its function is as follows. Catalyzes the NAD(P)H-dependent reduction of 4-hydroxyphenylpyruvate to 4-hydroxyphenyllactate and 3,4-dihydroxyphenylpyruvate to 3,4-dihydroxyphenyllactate in the biosynthesis of rosmarinic acid. Rosmarinic acid is an ester of caffeic acid and 3,4-dihydroxyphenyllactic acid. NADP is the preferred substrate. The sequence is that of Hydroxyphenylpyruvate reductase (HPPR) from Plectranthus scutellarioides (Coleus).